The following is a 386-amino-acid chain: MSFPADSVGLVTPQKFQFEEPLHLECGRVLPRFELMVETYGTLNADKSNAILICHALSGHHHAAGYHHEDDKKAGWWDSCIGPGKAIDTNKFFVVALNNIGGCSGSTGPTSPNPENDNRPYGPDFPLVTVRDWVKTQAMLSDRLGISVWYAVVGGSLGGMQALQWSVDYPDRLQKCVVIASAPKLSAQNIAFNEVARQSILSDPDFHHGRYLEKDSYPKRGLILARMVGHITYLSEEAMKQKFGRDLKSGKFMYGFDVEFQVESYLRYQGEQFSRNFDANTYLIMTKALDYFDPSREYGHSLTEAMSKTKCQFLIVSFTTDWRFAPSRSQEIVDALITNQKPVSYLDIDAEQGHDSFLFPIPLYVKTLRAFLGGEEHLKSTSLEAS.

In terms of domain architecture, AB hydrolase-1 spans 49–358 (NAILICHALS…DAEQGHDSFL (310 aa)). The Nucleophile role is filled by Ser156. Arg226 serves as a coordination point for substrate. Catalysis depends on residues Asp321 and His354. Residue Asp355 coordinates substrate.

It belongs to the AB hydrolase superfamily. MetX family. In terms of assembly, homodimer.

The protein resides in the cytoplasm. It carries out the reaction L-homoserine + succinyl-CoA = O-succinyl-L-homoserine + CoA. It functions in the pathway amino-acid biosynthesis; L-methionine biosynthesis via de novo pathway; O-succinyl-L-homoserine from L-homoserine: step 1/1. Its function is as follows. Transfers a succinyl group from succinyl-CoA to L-homoserine, forming succinyl-L-homoserine. The sequence is that of Homoserine O-succinyltransferase from Acinetobacter baumannii (strain AB307-0294).